The sequence spans 60 residues: DNA-directed RNA polymerase subunit Rpo6 (60 aa).

The protein belongs to the archaeal Rpo6/eukaryotic RPB6 RNA polymerase subunit family. In terms of assembly, part of the RNA polymerase complex.

Its subcellular location is the cytoplasm. The catalysed reaction is RNA(n) + a ribonucleoside 5'-triphosphate = RNA(n+1) + diphosphate. In terms of biological role, DNA-dependent RNA polymerase (RNAP) catalyzes the transcription of DNA into RNA using the four ribonucleoside triphosphates as substrates. In Methanothrix thermoacetophila (strain DSM 6194 / JCM 14653 / NBRC 101360 / PT) (Methanosaeta thermophila), this protein is DNA-directed RNA polymerase subunit Rpo6.